Consider the following 168-residue polypeptide: ATP synthase subunit b (168 aa).

Residues 10 to 30 (STILGNFILVTASFAVLIILI) form a helical membrane-spanning segment.

The protein belongs to the ATPase B chain family. As to quaternary structure, F-type ATPases have 2 components, F(1) - the catalytic core - and F(0) - the membrane proton channel. F(1) has five subunits: alpha(3), beta(3), gamma(1), delta(1), epsilon(1). F(0) has three main subunits: a(1), b(2) and c(10-14). The alpha and beta chains form an alternating ring which encloses part of the gamma chain. F(1) is attached to F(0) by a central stalk formed by the gamma and epsilon chains, while a peripheral stalk is formed by the delta and b chains.

The protein localises to the cell membrane. Its function is as follows. F(1)F(0) ATP synthase produces ATP from ADP in the presence of a proton or sodium gradient. F-type ATPases consist of two structural domains, F(1) containing the extramembraneous catalytic core and F(0) containing the membrane proton channel, linked together by a central stalk and a peripheral stalk. During catalysis, ATP synthesis in the catalytic domain of F(1) is coupled via a rotary mechanism of the central stalk subunits to proton translocation. In terms of biological role, component of the F(0) channel, it forms part of the peripheral stalk, linking F(1) to F(0). This is ATP synthase subunit b from Streptococcus suis (strain 98HAH33).